A 204-amino-acid chain; its full sequence is Imidazole glycerol phosphate synthase subunit HisH 1 (204 aa).

Residues 5-204 form the Glutamine amidotransferase type-1 domain; the sequence is KVVIIDTGCA…AKLIQNFLEL (200 aa). The Nucleophile role is filled by cysteine 80. Residues histidine 186 and glutamate 188 contribute to the active site.

As to quaternary structure, heterodimer of HisH and HisF.

Its subcellular location is the cytoplasm. It carries out the reaction 5-[(5-phospho-1-deoxy-D-ribulos-1-ylimino)methylamino]-1-(5-phospho-beta-D-ribosyl)imidazole-4-carboxamide + L-glutamine = D-erythro-1-(imidazol-4-yl)glycerol 3-phosphate + 5-amino-1-(5-phospho-beta-D-ribosyl)imidazole-4-carboxamide + L-glutamate + H(+). The enzyme catalyses L-glutamine + H2O = L-glutamate + NH4(+). It functions in the pathway amino-acid biosynthesis; L-histidine biosynthesis; L-histidine from 5-phospho-alpha-D-ribose 1-diphosphate: step 5/9. In terms of biological role, IGPS catalyzes the conversion of PRFAR and glutamine to IGP, AICAR and glutamate. The HisH subunit provides the glutamine amidotransferase activity that produces the ammonia necessary to HisF for the synthesis of IGP and AICAR. This Vibrio vulnificus (strain YJ016) protein is Imidazole glycerol phosphate synthase subunit HisH 1 (hisH1).